The following is a 185-amino-acid chain: Elongation factor P (185 aa).

Belongs to the elongation factor P family.

Its subcellular location is the cytoplasm. It participates in protein biosynthesis; polypeptide chain elongation. Involved in peptide bond synthesis. Stimulates efficient translation and peptide-bond synthesis on native or reconstituted 70S ribosomes in vitro. Probably functions indirectly by altering the affinity of the ribosome for aminoacyl-tRNA, thus increasing their reactivity as acceptors for peptidyl transferase. The chain is Elongation factor P from Caldicellulosiruptor saccharolyticus (strain ATCC 43494 / DSM 8903 / Tp8T 6331).